We begin with the raw amino-acid sequence, 115 residues long: 5-hydroxyisourate hydrolase (115 aa).

Residues 1-23 form a disordered region; it reads MSGLTTHILDQASGKPAAGVGVR. Substrate contacts are provided by His-7, Arg-45, and Tyr-112.

Belongs to the transthyretin family. 5-hydroxyisourate hydrolase subfamily. Homotetramer.

It carries out the reaction 5-hydroxyisourate + H2O = 5-hydroxy-2-oxo-4-ureido-2,5-dihydro-1H-imidazole-5-carboxylate + H(+). In terms of biological role, catalyzes the hydrolysis of 5-hydroxyisourate (HIU) to 2-oxo-4-hydroxy-4-carboxy-5-ureidoimidazoline (OHCU). This is 5-hydroxyisourate hydrolase from Caulobacter vibrioides (strain ATCC 19089 / CIP 103742 / CB 15) (Caulobacter crescentus).